Reading from the N-terminus, the 417-residue chain is Pre-mRNA-splicing factor RBM22 (417 aa).

A C3H1-type zinc finger spans residues 159–186; sequence RNRPHICSFWVKGECKRGEECPYRHEKP. Residues 232–305 form the RRM domain; sequence TTLYVGGLGD…RRLNVKWGRS (74 aa). 2 disordered regions span residues 303–348 and 369–417; these read GRSQ…SANY and GLSG…PSSG. The segment covering 309 to 318 has biased composition (basic and acidic residues); the sequence is RGKEREHDGS. The segment covering 369–391 has biased composition (pro residues); the sequence is GLSGPPPGFGPHMFPPMAPPPFL.

The protein belongs to the SLT11 family. Component of the pre-catalytic and catalytic spliceosome complexes. Component of the postcatalytic spliceosome P complex.

Its subcellular location is the nucleus. The protein resides in the cytoplasm. In terms of biological role, required for pre-mRNA splicing as component of the activated spliceosome. Involved in the first step of pre-mRNA splicing. Binds directly to the internal stem-loop (ISL) domain of the U6 snRNA and to the pre-mRNA intron near the 5' splice site during the activation and catalytic phases of the spliceosome cycle. This chain is Pre-mRNA-splicing factor RBM22 (rbm22), found in Xenopus laevis (African clawed frog).